A 470-amino-acid chain; its full sequence is Ribulose bisphosphate carboxylase large chain (470 aa).

Position 5 is an N6,N6,N6-trimethyllysine (K5). Positions 114 and 164 each coordinate substrate. The active-site Proton acceptor is the K166. Residue K168 coordinates substrate. 3 residues coordinate Mg(2+): K192, D194, and E195. K192 carries the post-translational modification N6-carboxylysine. Catalysis depends on H285, which acts as the Proton acceptor. Substrate contacts are provided by R286, H318, and S370.

Belongs to the RuBisCO large chain family. Type I subfamily. In terms of assembly, heterohexadecamer of 8 large chains and 8 small chains; disulfide-linked. The disulfide link is formed within the large subunit homodimers. The cofactor is Mg(2+). Post-translationally, the disulfide bond which can form in the large chain dimeric partners within the hexadecamer appears to be associated with oxidative stress and protein turnover.

It localises to the plastid. Its subcellular location is the chloroplast. It carries out the reaction 2 (2R)-3-phosphoglycerate + 2 H(+) = D-ribulose 1,5-bisphosphate + CO2 + H2O. The enzyme catalyses D-ribulose 1,5-bisphosphate + O2 = 2-phosphoglycolate + (2R)-3-phosphoglycerate + 2 H(+). Its function is as follows. RuBisCO catalyzes two reactions: the carboxylation of D-ribulose 1,5-bisphosphate, the primary event in carbon dioxide fixation, as well as the oxidative fragmentation of the pentose substrate in the photorespiration process. Both reactions occur simultaneously and in competition at the same active site. The protein is Ribulose bisphosphate carboxylase large chain of Bertiera breviflora.